A 59-amino-acid polypeptide reads, in one-letter code: Large ribosomal subunit protein bL32 (59 aa).

The interval 1–59 is disordered; the sequence is MAVQQNKKSPSKRGMHRAHDFLTTPPLAVESTTGEAHLRHHISPAGFYRGKKVTKGKGE. Residues 49-59 show a composition bias toward basic residues; sequence RGKKVTKGKGE.

It belongs to the bacterial ribosomal protein bL32 family.

The protein is Large ribosomal subunit protein bL32 of Dechloromonas aromatica (strain RCB).